Here is a 176-residue protein sequence, read N- to C-terminus: Large ribosomal subunit protein uL6 (176 aa).

This sequence belongs to the universal ribosomal protein uL6 family. Part of the 50S ribosomal subunit.

This protein binds to the 23S rRNA, and is important in its secondary structure. It is located near the subunit interface in the base of the L7/L12 stalk, and near the tRNA binding site of the peptidyltransferase center. The protein is Large ribosomal subunit protein uL6 of Paraburkholderia xenovorans (strain LB400).